The following is a 115-amino-acid chain: Protein Rev (115 aa).

A phosphoserine; by host CK2 mark is found at S5 and S8. A homomultimerization region spans residues 18-26 (LIKFLYQSN). Positions 23–48 (YQSNPPPSSEGTRQARRNRRRRWRER) are disordered. The short motif at 34-50 (TRQARRNRRRRWRERQR) is the Nuclear localization signal and RNA-binding (RRE) element. Over residues 36–48 (QARRNRRRRWRER) the composition is skewed to basic residues. The Nuclear export signal and binding to XPO1 motif lies at 73-83 (LQLPPQRLTLD). The tract at residues 89–115 (GTSGTQGVGSPQILVESPTVLESGTKE) is disordered. 2 positions are modified to phosphoserine; by host: S91 and S98.

Belongs to the HIV-1 REV protein family. As to quaternary structure, homomultimer; when bound to the RRE. Multimeric assembly is essential for activity and may involve XPO1. Binds to human KPNB1, XPO1, TNPO1, RANBP5 and IPO7. Interacts with the viral Integrase. Interacts with human KHDRBS1. Interacts with human NAP1; this interaction decreases Rev multimerization and stimulates its activity. Interacts with human DEAD-box helicases DDX3 and DDX24; these interactions may serve for viral RNA export to the cytoplasm and packaging, respectively. Interacts with human PSIP1; this interaction may inhibit HIV-1 DNA integration by promoting dissociation of the Integrase-LEDGF/p75 complex. Asymmetrically arginine dimethylated at one site by host PRMT6. Methylation impairs the RNA-binding activity and export of viral RNA from the nucleus to the cytoplasm. In terms of processing, phosphorylated by protein kinase CK2. Presence of, and maybe binding to the N-terminus of the regulatory beta subunit of CK2 is necessary for CK2-mediated Rev's phosphorylation.

It localises to the host nucleus. The protein localises to the host nucleolus. Its subcellular location is the host cytoplasm. In terms of biological role, escorts unspliced or incompletely spliced viral pre-mRNAs (late transcripts) out of the nucleus of infected cells. These pre-mRNAs carry a recognition sequence called Rev responsive element (RRE) located in the env gene, that is not present in fully spliced viral mRNAs (early transcripts). This function is essential since most viral proteins are translated from unspliced or partially spliced pre-mRNAs which cannot exit the nucleus by the pathway used by fully processed cellular mRNAs. Rev itself is translated from a fully spliced mRNA that readily exits the nucleus. Rev's nuclear localization signal (NLS) binds directly to KPNB1/Importin beta-1 without previous binding to KPNA1/Importin alpha-1. KPNB1 binds to the GDP bound form of RAN (Ran-GDP) and targets Rev to the nucleus. In the nucleus, the conversion from Ran-GDP to Ran-GTP dissociates Rev from KPNB1 and allows Rev's binding to the RRE in viral pre-mRNAs. Rev multimerization on the RRE via cooperative assembly exposes its nuclear export signal (NES) to the surface. Rev can then form a complex with XPO1/CRM1 and Ran-GTP, leading to nuclear export of the complex. Conversion from Ran-GTP to Ran-GDP mediates dissociation of the Rev/RRE/XPO1/RAN complex, so that Rev can return to the nucleus for a subsequent round of export. Beside KPNB1, also seems to interact with TNPO1/Transportin-1, RANBP5/IPO5 and IPO7/RANBP7 for nuclear import. The nucleoporin-like HRB/RIP is an essential cofactor that probably indirectly interacts with Rev to release HIV RNAs from the perinuclear region to the cytoplasm. The sequence is that of Protein Rev from Human immunodeficiency virus type 1 group M subtype B (isolate MN) (HIV-1).